The primary structure comprises 158 residues: HTH-type transcriptional repressor NicR (158 aa).

Residues 20-152 (TEQVGHLLRK…ILYLLRKMID (133 aa)) form the HTH marR-type domain. Residues 66 to 89 (QAELIKATAVDQATIRGIVERLKA) constitute a DNA-binding region (H-T-H motif).

The protein operates within cofactor degradation; nicotinate degradation [regulation]. Its function is as follows. Transcriptional repressor for the nicCDEFTP and nicXR operons, encoding the lower aerobic nicotinate degradation pathway. Acts under non-induced conditions: repression of the nicCDEFTP and nicXR operons becomes alleviated in presence of 6-hydroxynicotinate (6HNA). This chain is HTH-type transcriptional repressor NicR (nicR), found in Pseudomonas putida (strain ATCC 47054 / DSM 6125 / CFBP 8728 / NCIMB 11950 / KT2440).